A 198-amino-acid polypeptide reads, in one-letter code: dITP/XTP pyrophosphatase (198 aa).

9–14 (SNNAKK) provides a ligand contact to substrate. Mg(2+) is bound by residues aspartate 41 and aspartate 70. Aspartate 70 serves as the catalytic Proton acceptor. Residues serine 71, 153-156 (FGYD), lysine 176, and 181-182 (HR) each bind substrate.

It belongs to the HAM1 NTPase family. In terms of assembly, homodimer. Mg(2+) is required as a cofactor.

The catalysed reaction is XTP + H2O = XMP + diphosphate + H(+). It catalyses the reaction dITP + H2O = dIMP + diphosphate + H(+). The enzyme catalyses ITP + H2O = IMP + diphosphate + H(+). In terms of biological role, pyrophosphatase that catalyzes the hydrolysis of nucleoside triphosphates to their monophosphate derivatives, with a high preference for the non-canonical purine nucleotides XTP (xanthosine triphosphate), dITP (deoxyinosine triphosphate) and ITP. Seems to function as a house-cleaning enzyme that removes non-canonical purine nucleotides from the nucleotide pool, thus preventing their incorporation into DNA/RNA and avoiding chromosomal lesions. The sequence is that of dITP/XTP pyrophosphatase from Aromatoleum aromaticum (strain DSM 19018 / LMG 30748 / EbN1) (Azoarcus sp. (strain EbN1)).